The primary structure comprises 623 residues: Methionine--tRNA ligase (623 aa).

Positions 11 to 21 (PYANGPRHIGH) match the 'HIGH' region motif. Zn(2+) is bound by residues Cys143, Cys146, Cys156, and Cys159. Residues 347 to 351 (KFSSS) carry the 'KMSKS' region motif. An ATP-binding site is contributed by Ser350.

This sequence belongs to the class-I aminoacyl-tRNA synthetase family. MetG type 1 subfamily. Monomer. Zn(2+) serves as cofactor.

It localises to the cytoplasm. The enzyme catalyses tRNA(Met) + L-methionine + ATP = L-methionyl-tRNA(Met) + AMP + diphosphate. Its function is as follows. Is required not only for elongation of protein synthesis but also for the initiation of all mRNA translation through initiator tRNA(fMet) aminoacylation. The sequence is that of Methionine--tRNA ligase from Bifidobacterium animalis subsp. lactis (strain AD011).